The chain runs to 332 residues: Very-long-chain 3-oxoacyl-CoA reductase (332 aa).

A helical membrane pass occupies residues 15-35 (GQWALAGIGALYVATRVGAFL). Residues Val-60, Asp-115, Asp-123, Asn-142, Lys-177, Tyr-209, Lys-213, Val-242, and Thr-244 each contribute to the NADP(+) site. Tyr-209 functions as the Proton donor in the catalytic mechanism. Lys-213 acts as the Lowers pKa of active site Tyr in catalysis.

Belongs to the short-chain dehydrogenases/reductases (SDR) family.

Its subcellular location is the endoplasmic reticulum membrane. The enzyme catalyses a very-long-chain (3R)-3-hydroxyacyl-CoA + NADP(+) = a very-long-chain 3-oxoacyl-CoA + NADPH + H(+). It functions in the pathway lipid metabolism; fatty acid biosynthesis. Its function is as follows. Component of the microsomal membrane bound fatty acid elongation system, which produces the 26-carbon very long-chain fatty acids (VLCFA) from palmitate. Catalyzes the reduction of the 3-ketoacyl-CoA intermediate that is formed in each cycle of fatty acid elongation. VLCFAs serve as precursors for ceramide and sphingolipids. The chain is Very-long-chain 3-oxoacyl-CoA reductase from Neurospora crassa (strain ATCC 24698 / 74-OR23-1A / CBS 708.71 / DSM 1257 / FGSC 987).